The primary structure comprises 125 residues: Casein kinase I isoform alpha (125 aa).

Residues 1–125 form the Protein kinase domain; it reads GEEVAVKLES…LIDFGLAKKY (125 aa). Residue lysine 7 participates in ATP binding. Residue aspartate 97 is the Proton acceptor of the active site.

It belongs to the protein kinase superfamily. CK1 Ser/Thr protein kinase family. Casein kinase I subfamily. In terms of assembly, interacts with the Axin complex. Interacts with TUT1, leading to TUT1 phosphorylation. Interacts with FAM83A, FAM83B, FAM83C, FAM83D, FAM83E, FAM83F, FAM83G and FAM83H (via DUF1669). Interaction with FAM83H recruits CSNK1A1 to keratin filaments. Phosphorylated by MTOR in response to mitogenic stimulation, leading to its activation.

The protein localises to the cytoplasm. The protein resides in the cytoskeleton. It localises to the microtubule organizing center. Its subcellular location is the centrosome. It is found in the chromosome. The protein localises to the centromere. The protein resides in the kinetochore. It localises to the nucleus speckle. Its subcellular location is the cilium basal body. It is found in the spindle. The enzyme catalyses L-seryl-[protein] + ATP = O-phospho-L-seryl-[protein] + ADP + H(+). It catalyses the reaction L-threonyl-[protein] + ATP = O-phospho-L-threonyl-[protein] + ADP + H(+). In terms of biological role, casein kinases are operationally defined by their preferential utilization of acidic proteins such as caseins as substrates. It can phosphorylate a large number of proteins. Participates in Wnt signaling. Phosphorylates CTNNB1 at 'Ser-45'. May phosphorylate PER1 and PER2. May play a role in segregating chromosomes during mitosis. May play a role in keratin cytoskeleton disassembly and thereby, it may regulate epithelial cell migration. Acts as a positive regulator of mTORC1 and mTORC2 signaling in response to nutrients by mediating phosphorylation of DEPTOR inhibitor. Acts as an inhibitor of NLRP3 inflammasome assembly by mediating phosphorylation of NLRP3. The sequence is that of Casein kinase I isoform alpha (CSNK1A1) from Sus scrofa (Pig).